Reading from the N-terminus, the 466-residue chain is MNASRLPGFNDTSQDQPYPTSSEWFDGSNCSWVDAVSWGCNVTINGTSTNATSTDVTSFVLMAVTSVVLALIILATIVGNVFVIAAIIIERNLQNVANYLVASLAVADLMVACLVMPLGAVYEVSQGWILGPELCDMWTSSDVLCSSASILHLVAIATDRYWAVTDVDYIHIRNEKRIFTMIVLVWGAALVVSLAPQLGWKDPDYLARITQQQKCLVSQDLAYQIFATMSTFYVPLAVILILYWKIFQTARRRIRRRRDPPPPRPTSADGATPSGRPVQSARDRRFVKKRFLNLKKCNQRTRAETLAAALLLTEGQSTSTVDTLDEEPRTTAFTINEKVPPSVSPEKSSSTVTNGSKPERAIVPAPTHREKKESLEAKRERKAAKTLAIITGAFVFCWLPFFIMALVMPICQTCVISDYLASFFLWLGYFNSTLNPVIYTIFSPDFRQAFARILFGTHRRRRYKKF.

The segment at 1–21 is disordered; it reads MNASRLPGFNDTSQDQPYPTS. The Extracellular segment spans residues 1-66; the sequence is MNASRLPGFN…TSFVLMAVTS (66 aa). N-linked (GlcNAc...) asparagine glycans are attached at residues Asn2, Asn10, Asn29, Asn41, Asn45, and Asn50. The span at 10–21 shows a compositional bias: polar residues; the sequence is NDTSQDQPYPTS. The chain crosses the membrane as a helical span at residues 67–89; sequence VVLALIILATIVGNVFVIAAIII. The Cytoplasmic segment spans residues 90–99; it reads ERNLQNVANY. Residues 100 to 121 form a helical membrane-spanning segment; the sequence is LVASLAVADLMVACLVMPLGAV. Residues 122–136 lie on the Extracellular side of the membrane; the sequence is YEVSQGWILGPELCD. Cys135 and Cys215 form a disulfide bridge. Residues 137–158 form a helical membrane-spanning segment; sequence MWTSSDVLCSSASILHLVAIAT. Residues 159–177 are Cytoplasmic-facing; the sequence is DRYWAVTDVDYIHIRNEKR. A helical transmembrane segment spans residues 178–200; it reads IFTMIVLVWGAALVVSLAPQLGW. At 201–228 the chain is on the extracellular side; sequence KDPDYLARITQQQKCLVSQDLAYQIFAT. A helical membrane pass occupies residues 229–250; sequence MSTFYVPLAVILILYWKIFQTA. Residues 251 to 386 lie on the Cytoplasmic side of the membrane; the sequence is RRRIRRRRDP…AKRERKAAKT (136 aa). 2 disordered regions span residues 255-282 and 339-360; these read RRRRDPPPPRPTSADGATPSGRPVQSAR and VPPSVSPEKSSSTVTNGSKPER. A compositionally biased stretch (low complexity) spans 339–353; that stretch reads VPPSVSPEKSSSTVT. Residues 387 to 410 traverse the membrane as a helical segment; that stretch reads LAIITGAFVFCWLPFFIMALVMPI. Topologically, residues 411 to 419 are extracellular; it reads CQTCVISDY. The chain crosses the membrane as a helical span at residues 420-442; sequence LASFFLWLGYFNSTLNPVIYTIF. Over 443 to 466 the chain is Cytoplasmic; the sequence is SPDFRQAFARILFGTHRRRRYKKF.

The protein belongs to the G-protein coupled receptor 1 family.

The protein localises to the cell membrane. This is a receptor for 5-hydroxytryptamine (serotonin), a biogenic hormone that function as a neurotransmitter, a hormone, and a mitogen. The chain is 5-hydroxytryptamine receptor from Heliothis virescens (Tobacco budworm moth).